The sequence spans 345 residues: Phosphoribosylformylglycinamidine cyclo-ligase (345 aa).

The protein belongs to the AIR synthase family.

The protein localises to the cytoplasm. It carries out the reaction 2-formamido-N(1)-(5-O-phospho-beta-D-ribosyl)acetamidine + ATP = 5-amino-1-(5-phospho-beta-D-ribosyl)imidazole + ADP + phosphate + H(+). It functions in the pathway purine metabolism; IMP biosynthesis via de novo pathway; 5-amino-1-(5-phospho-D-ribosyl)imidazole from N(2)-formyl-N(1)-(5-phospho-D-ribosyl)glycinamide: step 2/2. This Myxococcus xanthus (strain DK1622) protein is Phosphoribosylformylglycinamidine cyclo-ligase.